A 164-amino-acid polypeptide reads, in one-letter code: PTS system sorbose-specific EIIB component (164 aa).

The PTS EIIB type-4 domain maps to 1-164 (MQITLARIDD…DKINETAFCE (164 aa)). The Pros-phosphohistidine intermediate role is filled by His-14. A Phosphohistidine; by EIIA modification is found at His-14.

Dimer of dimers.

It is found in the cytoplasm. The enzyme catalyses keto-L-sorbose(out) + N(pros)-phospho-L-histidyl-[protein] = L-sorbose 1-phosphate(in) + L-histidyl-[protein]. Functionally, the phosphoenolpyruvate-dependent sugar phosphotransferase system (PTS), a major carbohydrate active transport system, catalyzes the phosphorylation of incoming sugar substrates concomitant with their translocation across the cell membrane. The enzyme II SorABFM PTS system is involved in L-sorbose transport. This Klebsiella pneumoniae protein is PTS system sorbose-specific EIIB component.